The primary structure comprises 420 residues: RING finger protein 39 (420 aa).

The segment at 88–135 (CPLCGGSFEDPVLLACEHSFCRACLARRWGTPPATDTEASPTACPCCG) adopts an RING-type zinc-finger fold. Disordered stretches follow at residues 166–186 (PGAR…CLDP) and 246–265 (DRRS…DGPK). The region spanning 210 to 420 (DDLPEDYPVV…APLRIVPAES (211 aa)) is the B30.2/SPRY domain.

It localises to the cytoplasm. The enzyme catalyses S-ubiquitinyl-[E2 ubiquitin-conjugating enzyme]-L-cysteine + [acceptor protein]-L-lysine = [E2 ubiquitin-conjugating enzyme]-L-cysteine + N(6)-ubiquitinyl-[acceptor protein]-L-lysine.. The protein operates within protein modification; protein ubiquitination. Its function is as follows. Plays an inhibitory role in anti-RNA viral innate immunity by targeting the adapter DDX3X and promoting its 'Lys-48'-linked polyubiquitination. Alternatively, enhances the cGAS-STING pathway activation by promoting 'Lys-63'-linked ubiquitination of STING1, facilitating the STING1-TBK1 complex formation and STING1 activation. This is RING finger protein 39 (RNF39) from Macaca mulatta (Rhesus macaque).